Reading from the N-terminus, the 274-residue chain is Elongation factor Ts (274 aa).

Positions 79–82 (TDFV) are involved in Mg(2+) ion dislocation from EF-Tu.

It belongs to the EF-Ts family.

It is found in the cytoplasm. Associates with the EF-Tu.GDP complex and induces the exchange of GDP to GTP. It remains bound to the aminoacyl-tRNA.EF-Tu.GTP complex up to the GTP hydrolysis stage on the ribosome. This chain is Elongation factor Ts, found in Aster yellows witches'-broom phytoplasma (strain AYWB).